The primary structure comprises 763 residues: Long-chain-fatty-acid--CoA ligase ACSBG2 (763 aa).

A disordered region spans residues cysteine 47–tryptophan 78. The segment covering proline 51–glutamine 61 has biased composition (basic and acidic residues). Residues methionine 62 to tryptophan 78 show a composition bias toward polar residues. ATP contacts are provided by residues threonine 281 to lysine 289, glutamate 472 to serine 477, aspartate 550, arginine 565, and lysine 678.

Belongs to the ATP-dependent AMP-binding enzyme family. Bubblegum subfamily.

It is found in the cytoplasm. The catalysed reaction is a long-chain fatty acid + ATP + CoA = a long-chain fatty acyl-CoA + AMP + diphosphate. It carries out the reaction (5Z,8Z,11Z,14Z)-eicosatetraenoate + ATP + CoA = (5Z,8Z,11Z,14Z)-eicosatetraenoyl-CoA + AMP + diphosphate. The enzyme catalyses hexadecanoate + ATP + CoA = hexadecanoyl-CoA + AMP + diphosphate. It catalyses the reaction (9Z)-octadecenoate + ATP + CoA = (9Z)-octadecenoyl-CoA + AMP + diphosphate. The catalysed reaction is (9Z,12Z)-octadecadienoate + ATP + CoA = (9Z,12Z)-octadecadienoyl-CoA + AMP + diphosphate. It carries out the reaction tetracosanoate + ATP + CoA = tetracosanoyl-CoA + AMP + diphosphate. Its function is as follows. Mediates activation of long-chain fatty acids for both synthesis of cellular lipids, and degradation via beta-oxidation. In terms of biological role, catalyzes the conversion of fatty acids such as long chain and very long-chain fatty acids to their active form acyl-CoAs for both synthesis of cellular lipids, and degradation via beta-oxidation. Can activate diverse saturated, monosaturated and polyunsaturated fatty acids. The polypeptide is Long-chain-fatty-acid--CoA ligase ACSBG2 (Gallus gallus (Chicken)).